Here is a 97-residue protein sequence, read N- to C-terminus: MRDWNILEEVWQVIQERAEHPSAGSYVSSVLTHRKGIDKSLEKVGEEAVEFILAAKNQVPERTVSEAADLLFHLLVALQASGTDVGDVLDELAARRK.

It belongs to the PRA-PH family.

Its subcellular location is the cytoplasm. The enzyme catalyses 1-(5-phospho-beta-D-ribosyl)-ATP + H2O = 1-(5-phospho-beta-D-ribosyl)-5'-AMP + diphosphate + H(+). It participates in amino-acid biosynthesis; L-histidine biosynthesis; L-histidine from 5-phospho-alpha-D-ribose 1-diphosphate: step 2/9. This is Phosphoribosyl-ATP pyrophosphatase from Methanoculleus marisnigri (strain ATCC 35101 / DSM 1498 / JR1).